The sequence spans 731 residues: E3 ubiquitin-protein ligase SMURF1 (731 aa).

The region spanning 1–120 is the C2 domain; it reads MSNVVTRRGG…TGYQRLDLCK (120 aa). Residues 210-235 are disordered; the sequence is RVRGPEVREHVQTPQNRSHGFQSQDL. Residues 221–234 show a composition bias toward polar residues; it reads QTPQNRSHGFQSQD. 2 consecutive WW domains span residues 233-266 and 279-312; these read QDLP…DPRI and GSLP…DPRL. The 338-residue stretch at 394-731 folds into the HECT domain; the sequence is RPKDLKKRLM…VEETSGFAVE (338 aa). Cys699 (glycyl thioester intermediate) is an active-site residue.

It is found in the cytoplasm. Its subcellular location is the cell membrane. It carries out the reaction S-ubiquitinyl-[E2 ubiquitin-conjugating enzyme]-L-cysteine + [acceptor protein]-L-lysine = [E2 ubiquitin-conjugating enzyme]-L-cysteine + N(6)-ubiquitinyl-[acceptor protein]-L-lysine.. The protein operates within protein modification; protein ubiquitination. Functionally, E3 ubiquitin-protein ligase that acts as a negative regulator of BMP signaling pathway. Mediates ubiquitination and degradation of smad1 and smad5, 2 receptor-regulated SMADs specific for the BMP pathway. Promotes ubiquitination and subsequent proteasomal degradation of TRAF family members and rhoa. May play a role in dendrite formation by melanocytes. In Xenopus laevis (African clawed frog), this protein is E3 ubiquitin-protein ligase SMURF1 (smurf1).